The chain runs to 101 residues: Small ribosomal subunit protein uS14 (101 aa).

It belongs to the universal ribosomal protein uS14 family. As to quaternary structure, part of the 30S ribosomal subunit. Contacts proteins S3 and S10.

Binds 16S rRNA, required for the assembly of 30S particles and may also be responsible for determining the conformation of the 16S rRNA at the A site. In Psychromonas ingrahamii (strain DSM 17664 / CCUG 51855 / 37), this protein is Small ribosomal subunit protein uS14.